Reading from the N-terminus, the 361-residue chain is D-alanine--D-alanine ligase (361 aa).

In terms of domain architecture, ATP-grasp spans 134–344; it reads KLLLKSFNIP…FKDLVDNLIN (211 aa). 167 to 222 lines the ATP pocket; that stretch reads REALGYPVIVKPAVLGSSIGINVAYSENQIEFFIEEALKYDLTILIEKFIEAREIE. Mg(2+) is bound by residues D297, E311, and N313.

Belongs to the D-alanine--D-alanine ligase family. The cofactor is Mg(2+). Requires Mn(2+) as cofactor.

It localises to the cytoplasm. The enzyme catalyses 2 D-alanine + ATP = D-alanyl-D-alanine + ADP + phosphate + H(+). It participates in cell wall biogenesis; peptidoglycan biosynthesis. In terms of biological role, cell wall formation. The sequence is that of D-alanine--D-alanine ligase from Borrelia garinii subsp. bavariensis (strain ATCC BAA-2496 / DSM 23469 / PBi) (Borreliella bavariensis).